Reading from the N-terminus, the 70-residue chain is Small ribosomal subunit protein bS21 (70 aa).

Belongs to the bacterial ribosomal protein bS21 family.

The protein is Small ribosomal subunit protein bS21 of Sulfurovum sp. (strain NBC37-1).